The following is a 151-amino-acid chain: Deoxyuridine 5'-triphosphate nucleotidohydrolase (151 aa).

Substrate contacts are provided by residues 70 to 72, asparagine 83, 87 to 89, and methionine 97; these read RSG and LID.

It belongs to the dUTPase family. Requires Mg(2+) as cofactor.

It catalyses the reaction dUTP + H2O = dUMP + diphosphate + H(+). The protein operates within pyrimidine metabolism; dUMP biosynthesis; dUMP from dCTP (dUTP route): step 2/2. This enzyme is involved in nucleotide metabolism: it produces dUMP, the immediate precursor of thymidine nucleotides and it decreases the intracellular concentration of dUTP so that uracil cannot be incorporated into DNA. This Haemophilus influenzae (strain 86-028NP) protein is Deoxyuridine 5'-triphosphate nucleotidohydrolase.